The following is a 334-amino-acid chain: MKNKEVRILSTGKYLPPISISNHDLSKIIDTNDNWIKTRTGIEKRRITKGENTSDLGTKAALDALRKGGISPEELDLIIVATITPDYFTPSTACIIQRNIKAYNAFAFDISAACSGFTYGISIASQFIRNGVAKKVLVIGVETLSKLVDWKDRNTCILFGDGSGAAILTESNEKGIMNVYLGSDGRGADLLKCKSSSLTVNSDELKELLNSKEEDLENKFIEMDGKEIFKFAVKVMIKGIEKVLKDSNLELKDINYIIPHQANLRIIEHVAKKLGIDENKFYININHYGNTSAASIPIALAEVDEKGLLKKGDNVILVGFGAGLTWAASLIKWI.

Active-site residues include cysteine 114 and histidine 260. Positions 261 to 265 (QANLR) are ACP-binding. Asparagine 290 is an active-site residue.

The protein belongs to the thiolase-like superfamily. FabH family. Homodimer.

It localises to the cytoplasm. The catalysed reaction is malonyl-[ACP] + acetyl-CoA + H(+) = 3-oxobutanoyl-[ACP] + CO2 + CoA. Its pathway is lipid metabolism; fatty acid biosynthesis. In terms of biological role, catalyzes the condensation reaction of fatty acid synthesis by the addition to an acyl acceptor of two carbons from malonyl-ACP. Catalyzes the first condensation reaction which initiates fatty acid synthesis and may therefore play a role in governing the total rate of fatty acid production. Possesses both acetoacetyl-ACP synthase and acetyl transacylase activities. Its substrate specificity determines the biosynthesis of branched-chain and/or straight-chain of fatty acids. The chain is Beta-ketoacyl-[acyl-carrier-protein] synthase III from Clostridium tetani (strain Massachusetts / E88).